A 437-amino-acid chain; its full sequence is MRRAALRLCTLSKGLLAPSRGLTQESQNPENVFHIREVRDKLREIVGASTNWRDHVKAMEERKLLHSFLAKSQKGLPPRTMKDSYIEVFLPLGSQPELREKYLTVQNTVRFGRILEDLDSLGVLICYMHNKIHSAKMSPLSIVTALVDKIDMCKKNLSPEQDIKFSGHVSWVGKTSMEVKMHMFQLHGNDFSPVLDATFVMVARDSENKGPAFVNPLILESPEEEELFQQGELNKGRRVAFSSTSLLKMAPTAEERTTIHEMFLNTLDPKTISFRSRVLPANSVWMENSKLKSLDICHPQERNIFNRIFGGFLMRKAYELGWATACNFGGSRPFIVAVDDIMFQKPVEVGSLLFLSAQVCFTQGNYIQVRVHSEVASLQDKEHMTTNVFHFTFMSEKEVPLVFPRTYGESMLYLDGQRHFKSMSAPVTLKRNYVVEP.

A mitochondrion-targeting transit peptide spans 1 to 21 (MRRAALRLCTLSKGLLAPSRG). HotDog ACOT-type domains follow at residues 84 to 207 (SYIE…RDSE) and 287 to 399 (ENSK…EKEV). Lysine 101 bears the N6-acetyllysine mark.

Belongs to the acyl coenzyme A hydrolase family. In terms of assembly, interacts with NYAP1, NYAP2 and MYO16.

It is found in the mitochondrion. The protein resides in the mitochondrion matrix. The protein localises to the mitochondrion inner membrane. It carries out the reaction butanoyl-CoA + H2O = butanoate + CoA + H(+). It catalyses the reaction propanoyl-CoA + H2O = propanoate + CoA + H(+). The catalysed reaction is hexadecanoyl-CoA + H2O = hexadecanoate + CoA + H(+). The enzyme catalyses octanoyl-CoA + H2O = octanoate + CoA + H(+). It carries out the reaction decanoyl-CoA + H2O = decanoate + CoA + H(+). It catalyses the reaction tetradecanoyl-CoA + H2O = tetradecanoate + CoA + H(+). The catalysed reaction is 4,8-dimethylnonanoyl-CoA + H2O = 4,8-dimethylnonanoate + CoA + H(+). The enzyme catalyses 3-methylbutanoyl-CoA + H2O = 3-methylbutanoate + CoA + H(+). It carries out the reaction 2-methylpropanoyl-CoA + H2O = 2-methylpropanoate + CoA + H(+). It functions in the pathway lipid metabolism; fatty acid metabolism. With respect to regulation, strongly inhibited by NADH and CoA. In terms of biological role, mitochondrial acyl-CoA thioesterase. Catalyzes the hydrolysis of acyl-CoAs into free fatty acids and coenzyme A (CoA), regulating their respective intracellular levels. Regulates both mitochondrial lipid and amino acid metabolism. This Bos taurus (Bovine) protein is Acyl-coenzyme A thioesterase 9, mitochondrial (ACOT9).